The sequence spans 124 residues: Fluoride-specific ion channel FluC (124 aa).

Helical transmembrane passes span 3 to 23 (YLLVFLGGGLGAMFRHFINTV), 36 to 56 (TFFINVSGSLVMGLIAGYFAF), 66 to 86 (LFLMTGILGGYTTFSAFSLDA), and 100 to 120 (LYVLGSVALAIAGLFAGLALI). Residues glycine 74 and threonine 77 each contribute to the Na(+) site.

This sequence belongs to the fluoride channel Fluc/FEX (TC 1.A.43) family.

It is found in the cell inner membrane. It carries out the reaction fluoride(in) = fluoride(out). Its activity is regulated as follows. Na(+) is not transported, but it plays an essential structural role and its presence is essential for fluoride channel function. Functionally, fluoride-specific ion channel. Important for reducing fluoride concentration in the cell, thus reducing its toxicity. The protein is Fluoride-specific ion channel FluC of Rhodopseudomonas palustris (strain BisB5).